We begin with the raw amino-acid sequence, 443 residues long: MSMDNNDDHESKLSILMDMFPAISKSKLQVHLLENNNDLDLTIGLLLKENDDKSTVDNELHQLYDMFPQLDCSVIKDQFVINEKSVESTISDLLNYETLQKLKDNQANSPDSVKRNEKKNNWESTNDHIESIIKFTDAPKNIAQEYLAENGFDTVKAIIKIILDYYDKRDFKKDVDTFKVKRSPNTTVRGGRVQSSTGLAHVLKKGKESANVAQESLKRPRSYKHSLDSPQMVELNELVADNRDLKAINHEFLQKCLQFYDGDVVKVLNISSLLIEDDKNITKTWNFDEGFTLTSRDNCKQHLPKFSTPQISRRNEVGNTYKLPLHDKETPEGAVPVINNLFQTYRLDFHGFLPSEAVSTLKLALNKWWSKEVAERELNSHNINSYGSKVQFVSPLIVVTGRGIHSIGGISKVRLQVKSFLEKNHYIFWEESSYFRIEGKKKK.

CUE domains lie at 8–51 (DHES…KEND) and 55–98 (TVDN…NYET). The region spanning 347-443 (LDFHGFLPSE…YFRIEGKKKK (97 aa)) is the Smr domain.

Functionally, mRNA endonuclease involved in the No-Go Decay (NGD) pathway, which catalyzes mRNA cleavage and degradation in response to ribosome collisions. Acts downstream of the ribosome collision sensor HEL2. Specifically recognizes and binds RPS7/eS7 polyubiquitinated by MOT2/NOT4 and HEL2, promoting CUE2 recruitment to stalled ribosomes, where it mediates mRNA cleavage upstream of the colliding ribosome. Also mediates mRNA cleavage within colliding ribosomes: recruited to colliding ribosomes downstream of the RQT (ribosome quality control trigger) complex following disassembly of stalled ribosomes and cleaves mRNAs partially released from the colliding ribosome. In Saccharomyces cerevisiae (strain ATCC 204508 / S288c) (Baker's yeast), this protein is Endonuclease CUE2.